Reading from the N-terminus, the 1452-residue chain is Receptor-type tyrosine-protein phosphatase mu (1452 aa).

The first 20 residues, 1–20, serve as a signal peptide directing secretion; sequence MRTLGTCLVTLAGLLLTAAG. The Extracellular segment spans residues 21 to 742; it reads ETFSGGCLFD…PEKQTDHTVK (722 aa). Residues 22–184 enclose the MAM domain; sequence TFSGGCLFDE…VKVLGHPCTR (163 aa). The cysteines at positions 27 and 36 are disulfide-linked. N-linked (GlcNAc...) asparagine glycans are attached at residues Asn-72, Asn-92, Asn-131, and Asn-249. Disulfide bonds link Cys-96–Cys-182 and Cys-206–Cys-260. One can recognise an Ig-like C2-type domain in the interval 186 to 277; the sequence is PHFLRIQNVE…VGISNYAELV (92 aa). 4 consecutive Fibronectin type-III domains span residues 284–379, 382–480, 481–587, and 589–671; these read PIAP…CADP, GPRK…TDED, LPGA…SAPS, and PAYE…DSLQ. 8 N-linked (GlcNAc...) asparagine glycosylation sites follow: Asn-406, Asn-414, Asn-454, Asn-534, Asn-544, Asn-598, Asn-651, and Asn-681. The helical transmembrane segment at 743–764 threads the bilayer; it reads IAGVIAGILLFVIIFLGVVLVM. Residues 765–1452 are Cytoplasmic-facing; the sequence is KKRKLAKKRK…EVALEYLNSG (688 aa). Residue Ser-821 is modified to Phosphoserine. Tyrosine-protein phosphatase domains follow at residues 900 to 1154 and 1186 to 1448; these read FKEE…ILEA and IKEE…ALEY. Substrate is bound by residues Asp-1063, 1095–1101, and Gln-1139; that span reads CSAGAGR. Cys-1095 serves as the catalytic Phosphocysteine intermediate. Cys-1389 serves as the catalytic Phosphocysteine intermediate.

Belongs to the protein-tyrosine phosphatase family. Receptor class 2B subfamily. As to quaternary structure, homodimer. As to expression, most abundant in lung, less in brain and heart.

Its subcellular location is the cell membrane. It carries out the reaction O-phospho-L-tyrosyl-[protein] + H2O = L-tyrosyl-[protein] + phosphate. Its function is as follows. Receptor protein-tyrosine phosphatase that mediates homotypic cell-cell interactions and plays a role in adipogenic differentiation via modulation of p120 catenin/CTNND1 phosphorylation. Promotes CTNND1 dephosphorylation and prevents its cytoplasmic localization where it inhibits SLC2A4 membrane trafficking. In turn, SLC2A4 is directed to the plasma membrane and performs its glucose transporter function. This is Receptor-type tyrosine-protein phosphatase mu (Ptprm) from Mus musculus (Mouse).